A 245-amino-acid chain; its full sequence is DNA repair protein RecO (245 aa).

The protein belongs to the RecO family.

Functionally, involved in DNA repair and RecF pathway recombination. In Pectobacterium atrosepticum (strain SCRI 1043 / ATCC BAA-672) (Erwinia carotovora subsp. atroseptica), this protein is DNA repair protein RecO.